A 199-amino-acid chain; its full sequence is uncharacterized protein (199 aa).

The helical transmembrane segment at 17–37 (AGAVTLGIGFFALASALWFLI) threads the bilayer.

Its subcellular location is the membrane. This is an uncharacterized protein from Homo sapiens (Human).